We begin with the raw amino-acid sequence, 669 residues long: MPAKPVNPDLQKERSTATFNPREFSVLWAGGEERFKEKKALEKLFLEDPALQDDLPISYLSHKELYEHSLRKACIIGEKIRKLRADGEDGVDTYNALLGGSLGSAILKEGNPLALHYVMFVPTIMGQGTMDQQVEWLSKAWDCEIIGTYAQTELGHGTFLRGLETRADYDASTQEFVINTPSLSAYKWWPGGLGHTANHAVVVAQLYTKGEFRGLAPFIVQLRDSDTHRPMPGIDIGDIGTKLGMKGVNNGYLGLKNVRVPLNNMLMKNQQVLPDGTYVAPKNSVLTYGTMMFVRCALIRDTAQSLAKASTIATRYSAVRRQSPIDPNQPEPQIMDHTTQQLKLFPQIAKAIVFKTTGDGIWNMYNVISGEIEQGNLDRLPEMHALSCCLKAICSADAAAGVETCRLSCGGHGYMDCSNFPTIYGMTTAVCTYEGENTVMLLQTARYLVKVYGQALNGEKLVPTVSYISDAINQTKFVNFDGSLRSIVKAFQFVAANKTRIAYEQIELRRKQGYGTEVAANLCGTFLTAAADLHGRAFLAQTAYTELLALSREVSPELAEVLKVVLELYLVDACLNRIGDFLRFIDLTDQDVTKLEVRLENCLKRFRPNAVSLVDSFDLHDRVLDSALGAYDGNVYEHIFESTKKNPLNKEPVNGAFHKYLKPFMKAHL.

FAD contacts are provided by Thr152 and Gly191. The active-site Proton acceptor is the Glu434. Position 544 is a phosphotyrosine (Tyr544). Ser551 is modified (phosphoserine). A Microbody targeting signal motif is present at residues 667–669 (AHL).

The protein belongs to the acyl-CoA oxidase family. As to quaternary structure, homodimer. FAD is required as a cofactor. Expressed in glia.

It is found in the peroxisome. The protein localises to the nucleus. It carries out the reaction a 2,3-saturated acyl-CoA + O2 = a (2E)-enoyl-CoA + H2O2. Its pathway is lipid metabolism; peroxisomal fatty acid beta-oxidation. Catalyzes the desaturation of acyl-CoAs to 2-trans-enoyl-CoAs. First enzyme of the fatty acid beta-oxidation pathway. The chain is Acyl-coenzyme A oxidase 1 from Drosophila melanogaster (Fruit fly).